Here is a 550-residue protein sequence, read N- to C-terminus: MLKNINPTQTQAWKALTAHFESAQDMDLKALFAQDSERFAKYSARFGQDILVDYSKNLVNAETMQHLFALAKETDLQSAITAMFKGEAINQTEDRAVLHTALRNRSNSPVLVNGEDVMPAVNAVLAKMKAFSERVIGGEWKGFTGKAITDVVNIGIGGSDLGPYMVTEALVPYKNHLTMHFVSNVDGTHMAETLKNVDPETTLFLVASKTFTTQETMTNAHTARDWFLKAAGDEAHVAKHFAALSTNGKAVAEFGIDTDNMFEFWDWVGGRYSLWSAIGLSIILSIGYDNFVELLAGAHEMDQHFVNTPFESNIPVILALIGIWYNNFHGAESEAILPYDQYLHRFAAYFQQGNMESNGKYVDRDGNPVTYQTGPIIWGEPGTNGQHAFYQLIHQGTKLIPCDFIAPAVSHNLVGDHHQKLMSNFFAQTEALAFGKSAQAVQAELEKAGKSAAEIAALVPFKVFEGNRPTNSILVKQITPRTLGNLIAMYEHKIFVQGVIWNIFSFDQWGVELGKQLANQILPELADSAAVTSHDSSTNGLINAFKAFRA.

Residue E356 is the Proton donor of the active site. Catalysis depends on residues H387 and K515.

This sequence belongs to the GPI family.

Its subcellular location is the cytoplasm. The catalysed reaction is alpha-D-glucose 6-phosphate = beta-D-fructose 6-phosphate. It functions in the pathway carbohydrate biosynthesis; gluconeogenesis. The protein operates within carbohydrate degradation; glycolysis; D-glyceraldehyde 3-phosphate and glycerone phosphate from D-glucose: step 2/4. In terms of biological role, catalyzes the reversible isomerization of glucose-6-phosphate to fructose-6-phosphate. The polypeptide is Glucose-6-phosphate isomerase (Vibrio cholerae serotype O1 (strain ATCC 39541 / Classical Ogawa 395 / O395)).